Consider the following 491-residue polypeptide: Delayed-rectifier potassium channel regulatory subunit KCNS3 (491 aa).

Over 1–182 the chain is Cytoplasmic; the sequence is MVFGEFFHRP…IRMENPAYCL (182 aa). Residues 183 to 204 traverse the membrane as a helical segment; that stretch reads SAKLIAISSLSVVLASIVAMCV. At 205–220 the chain is on the extracellular side; that stretch reads HSMSEFQNEDGEVDDP. A helical membrane pass occupies residues 221–243; sequence VLEGVEIACIAWFTGELAIRLVA. Topologically, residues 244-254 are cytoplasmic; that stretch reads APSQKKFWKNP. A helical transmembrane segment spans residues 255 to 275; the sequence is LNIIDFVSIIPFYATLAVDTK. At 276-285 the chain is on the extracellular side; that stretch reads EEESEDIENM. Residues 286 to 306 form a helical; Voltage-sensor membrane-spanning segment; the sequence is GKVVQILRLMRIFRILKLARH. At 307–321 the chain is on the cytoplasmic side; that stretch reads SVGLRSLGATLRHSY. Residues 322-343 form a helical membrane-spanning segment; that stretch reads HEVGLLLLFLSVGISIFSVLIY. Topologically, residues 344 to 357 are extracellular; it reads SVEKDEHKSSLTSI. Positions 358–369 form an intramembrane region, helical; it reads PICWWWATISMT. The Selectivity filter signature appears at 370 to 375; the sequence is TVGYGD. Residues 370–377 lie within the membrane without spanning it; that stretch reads TVGYGDTH. At 378–384 the chain is on the extracellular side; sequence PVTLAGK. A helical membrane pass occupies residues 385 to 413; sequence IIASTCIICGILVVALPITIIFNKFSKYY. Topologically, residues 414–491 are cytoplasmic; the sequence is QKQKDMEVDQ…TASLENCTGK (78 aa).

This sequence belongs to the potassium channel family. S (TC 1.A.1.2) subfamily. Kv9.3/KCNS3 sub-subfamily. As to quaternary structure, heterotetramer with KCNB1. Does not form homomultimers.

It localises to the cell membrane. Potassium channel regulatory subunit that modulates the delayed rectifier potassium channel activity of KCNB1 by namely slowing down the deactivation and inactivation time constants. While it does not form functional channel on its own, it can form functional heterotetrameric channels with KCNB1. The sequence is that of Delayed-rectifier potassium channel regulatory subunit KCNS3 from Mus musculus (Mouse).